We begin with the raw amino-acid sequence, 361 residues long: Anhydro-N-acetylmuramic acid kinase (361 aa).

10–17 provides a ligand contact to ATP; sequence GTSLDGVD.

This sequence belongs to the anhydro-N-acetylmuramic acid kinase family.

It carries out the reaction 1,6-anhydro-N-acetyl-beta-muramate + ATP + H2O = N-acetyl-D-muramate 6-phosphate + ADP + H(+). It functions in the pathway amino-sugar metabolism; 1,6-anhydro-N-acetylmuramate degradation. Its pathway is cell wall biogenesis; peptidoglycan recycling. Catalyzes the specific phosphorylation of 1,6-anhydro-N-acetylmuramic acid (anhMurNAc) with the simultaneous cleavage of the 1,6-anhydro ring, generating MurNAc-6-P. Is required for the utilization of anhMurNAc either imported from the medium or derived from its own cell wall murein, and thus plays a role in cell wall recycling. This is Anhydro-N-acetylmuramic acid kinase from Gluconobacter oxydans (strain 621H) (Gluconobacter suboxydans).